A 70-amino-acid chain; its full sequence is DNA gyrase inhibitor YacG (70 aa).

Zn(2+) contacts are provided by Cys-9, Cys-12, Cys-28, and Cys-32. Residues 43–70 (ESRKIPGSSIDPESIVTTNNKQDNVDEQ) form a disordered region.

Belongs to the DNA gyrase inhibitor YacG family. In terms of assembly, interacts with GyrB. The cofactor is Zn(2+).

Inhibits all the catalytic activities of DNA gyrase by preventing its interaction with DNA. Acts by binding directly to the C-terminal domain of GyrB, which probably disrupts DNA binding by the gyrase. This chain is DNA gyrase inhibitor YacG, found in Legionella pneumophila (strain Corby).